Consider the following 248-residue polypeptide: Pulmonary surfactant-associated protein A (248 aa).

The signal sequence occupies residues Met-1–Cys-20. An N-linked (GlcNAc...) asparagine glycan is attached at Asn-21. The Collagen-like domain occupies Gly-28–Pro-100. The segment at Gly-28 to Pro-100 is disordered. Residues Pro-30, Pro-33, Pro-36, Pro-42, Pro-54, Pro-57, Pro-63, Pro-67, Pro-70, and Pro-76 each carry the 4-hydroxyproline modification. A compositionally biased stretch (basic and acidic residues) spans Pro-42–Lys-51. The span at Pro-54–Gly-65 shows a compositional bias: pro residues. Positions Leu-69–Pro-82 are enriched in low complexity. Positions Glu-84–Glu-93 are enriched in basic and acidic residues. Positions Leu-132–Phe-248 constitute a C-type lectin domain. 2 disulfide bridges follow: Cys-155-Cys-246 and Cys-224-Cys-238. Asn-207 carries N-linked (GlcNAc...) asparagine glycosylation. Ca(2+) contacts are provided by Glu-215, Arg-217, Asn-234, and Asp-235.

The protein belongs to the SFTPA family. Oligomeric complex of 6 set of homotrimers.

The protein resides in the secreted. The protein localises to the extracellular space. It is found in the extracellular matrix. Its subcellular location is the surface film. Functionally, in presence of calcium ions, it binds to surfactant phospholipids and contributes to lower the surface tension at the air-liquid interface in the alveoli of the mammalian lung and is essential for normal respiration. Enhances the expression of MYO18A/SP-R210 on alveolar macrophages. The protein is Pulmonary surfactant-associated protein A (Sftpa1) of Mus musculus (Mouse).